A 901-amino-acid polypeptide reads, in one-letter code: Protein translocase subunit SecA (901 aa).

ATP-binding positions include glutamine 87, 105–109 (GEGKT), and aspartate 512. The segment at 868-901 (AALAAQTGERKVGRNDPCPCGSGKKYKQCHGRLQ) is disordered. 4 residues coordinate Zn(2+): cysteine 885, cysteine 887, cysteine 896, and histidine 897. Basic residues predominate over residues 891 to 901 (KKYKQCHGRLQ).

It belongs to the SecA family. In terms of assembly, monomer and homodimer. Part of the essential Sec protein translocation apparatus which comprises SecA, SecYEG and auxiliary proteins SecDF-YajC and YidC. It depends on Zn(2+) as a cofactor.

It is found in the cell inner membrane. The protein localises to the cytoplasm. It carries out the reaction ATP + H2O + cellular proteinSide 1 = ADP + phosphate + cellular proteinSide 2.. Functionally, part of the Sec protein translocase complex. Interacts with the SecYEG preprotein conducting channel. Has a central role in coupling the hydrolysis of ATP to the transfer of proteins into and across the cell membrane, serving both as a receptor for the preprotein-SecB complex and as an ATP-driven molecular motor driving the stepwise translocation of polypeptide chains across the membrane. This is Protein translocase subunit SecA from Escherichia coli O45:K1 (strain S88 / ExPEC).